A 331-amino-acid chain; its full sequence is Biotin synthase (331 aa).

The Radical SAM core domain occupies 39-264 (SELQTCYLIS…VFPRSMVRLA (226 aa)). Residues Cys54, Cys58, and Cys61 each coordinate [4Fe-4S] cluster. Residues Cys98, Cys130, Cys190, and Arg262 each coordinate [2Fe-2S] cluster.

It belongs to the radical SAM superfamily. Biotin synthase family. Homodimer. It depends on [4Fe-4S] cluster as a cofactor. Requires [2Fe-2S] cluster as cofactor.

The enzyme catalyses (4R,5S)-dethiobiotin + (sulfur carrier)-SH + 2 reduced [2Fe-2S]-[ferredoxin] + 2 S-adenosyl-L-methionine = (sulfur carrier)-H + biotin + 2 5'-deoxyadenosine + 2 L-methionine + 2 oxidized [2Fe-2S]-[ferredoxin]. It functions in the pathway cofactor biosynthesis; biotin biosynthesis; biotin from 7,8-diaminononanoate: step 2/2. Functionally, catalyzes the conversion of dethiobiotin (DTB) to biotin by the insertion of a sulfur atom into dethiobiotin via a radical-based mechanism. This is Biotin synthase from Chlamydia pneumoniae (Chlamydophila pneumoniae).